A 112-amino-acid chain; its full sequence is Protein preY, mitochondrial (112 aa).

The transit peptide at 1–34 (MLTTTCRRLSQALQRPHALSAVAQRCLRAPGARS) directs the protein to the mitochondrion. In terms of domain architecture, TRM112 spans 49 to 95 (HPALLQFLVCPLSKKPLRYDASTNELINDELGIAYPIIDGVPNMIPQ).

It belongs to the PREY family. Interacts (via TRM112 domain) with NDUFAF5; the interaction is direct and stabilizes NDUFAF5 protein. Interacts with COQ5; the interaction is direct, stabilizes COQ5 protein and associates PYURF with COQ enzyme complex.

The protein localises to the mitochondrion. In mitochondria, S-adenosylmethionine-dependent methyltransferase chaperone that supports both coenzyme Q biosynthesis, by stabilizing its components, such as COQ5, and NADH:ubiquinone oxidoreductase complex (complex I, MT-ND1) assembly, by stabilizing complex I assembly factors, such as NDUFAF5. The polypeptide is Protein preY, mitochondrial (Pyurf) (Rattus norvegicus (Rat)).